The sequence spans 1249 residues: MSQLSKNLGDSSPPAEAPKPPVYSRPTVLMRAPPASSRAPPVPWDPPPIDLQASLAAWQAPQPAWEAPQGQLPAPVVPMTQPPALGGPIVPAPPLGGPMGKPPTPGVLMVHPPPPGAPMAQPPTPGVLMVHPSAPGAPMAHPPPPGTPMSHPPPPGTPMAHPPPPGTPMAHPPPPGTPMVHPPPPGTPMAHPPPPGTPMAHPPPPGTPMAHPPPPGTPMAHPPPPGTPMAQPPAPGVLMAQPLTPGVLMVQPAAPGAPMVQPPPAAMMTQPQPSGAPMAKPPGPGVLMIHPPGARAPMTQPPASGAPMAQPAAPPAQPMAPPAQPMASWAPQAQPLILQIQSQVIRAPPQVPQGPQAPPAQLATPPGWQATSPGWQATQQGWQATPLTWQTTQVTWQAPAVTWQVPPPMRQGPPPIRPGPPPIRPGPPPVRQAPPLIRQAPPVIRQAPPVIRQAPPVIRQAPAVIRQAPPVIRQAPPVIRQAPPVIRQAPPLIRQAPPPIRPAPQVLATQPPLWQALPPPPPLRQAPQARLPAPQVQAAPQVPTAPPATQVPAAPPAGPQVPQPVLPAPLSAPLSAPQAVHCPSIIWQAPKGQPPVPHEIPTSMEFQEVQQTQALAWQAQKAPTHIWQPLPAQEAQRQAPPLVQLEQPFQGAPPSQKAVQIQLPPQQAQASGPQAEVPTLPLQPSWQAPPAVLQAQPGPPVAAANFPLGSAKSLMTPSGECRASSIDRRGSSKERRTSSKERRAPSKDRMIFAATFCAPKAVSAARAHLPAAWKNLPATPETFAPSSSVFPATSQFQPASLNAFKGPSAASETPKSLPYALQDPFACVEALPAVPWVPQPNMNASKASQAVPTFLMATAAAPQATATTQEASKTSVEPPRRSGKATRKKKHLEAQEDSRGHTLAFHDWQGPRPWENLNLSDWEVQSPIQVSGDWEHPNTPRGLSGWEGPSTSRILSGWEGPSASWALSAWEGPSTSRALGLSESPGSSLPVVVSEVASVSPGSSATQDNSKVEAQPLSPLDERANALVQFLLVKDQAKVPVQRSEMVKVILREYKDECLDIINRANNKLECAFGYQLKEIDTKNHAYIIINKLGYHTGNLVASYLDRPKFGLLMVVLSLIFMKGNCVREDLIFNFLFKLGLDVRETNGLFGNTKKLITEVFVRQKYLEYRRIPYTEPAEYEFLWGPRAFLETSKMLVLRFLAKLHKKDPQSWPFHYLEALAECEWEDTDEDEPDTGDSAHGPTSRPPPR.

Over residues 1–10 the composition is skewed to polar residues; it reads MSQLSKNLGD. Disordered regions lie at residues 1 to 50, 134 to 233, 300 to 327, 349 to 378, 410 to 433, 515 to 569, 647 to 679, 714 to 746, 862 to 910, and 930 to 957; these read MSQL…PPID, APGA…AQPP, QPPASGAPMAQPAAPPAQPMAPPAQPMA, PQVPQGPQAPPAQLATPPGWQATSPGWQAT, RQGPPPIRPGPPPIRPGPPPVRQA, QALP…LPAP, QPFQGAPPSQKAVQIQLPPQQAQASGPQAEVPT, LMTPSGECRASSIDRRGSSKERRTSSKERRAPS, PQAT…DWQG, and VSGDWEHPNTPRGLSGWEGPSTSRILSG. Pro residues-rich tracts occupy residues 40-49 and 140-233; these read PPVPWDPPPI and AHPP…AQPP. Residues 301–311 show a composition bias toward low complexity; the sequence is PPASGAPMAQP. Pro residues-rich tracts occupy residues 312 to 324 and 349 to 358; these read AAPPAQPMAPPAQ and PQVPQGPQAP. A compositionally biased stretch (polar residues) spans 369 to 378; that stretch reads QATSPGWQAT. Residues 410–432 are compositionally biased toward pro residues; the sequence is RQGPPPIRPGPPPIRPGPPPVRQ. Low complexity predominate over residues 525 to 552; it reads QAPQARLPAPQVQAAPQVPTAPPATQVP. Pro residues predominate over residues 553 to 567; it reads AAPPAGPQVPQPVLP. Low complexity predominate over residues 662 to 675; it reads QLPPQQAQASGPQA. The segment covering 725–746 has biased composition (basic and acidic residues); it reads SIDRRGSSKERRTSSKERRAPS. Residues 862–871 are compositionally biased toward low complexity; the sequence is PQATATTQEA. The span at 881–891 shows a compositional bias: basic residues; it reads RSGKATRKKKH. The 200-residue stretch at 1020–1219 folds into the MAGE domain; it reads LDERANALVQ…QSWPFHYLEA (200 aa). Over residues 1226–1235 the composition is skewed to acidic residues; the sequence is EDTDEDEPDT. Residues 1226-1249 are disordered; sequence EDTDEDEPDTGDSAHGPTSRPPPR.

In terms of assembly, part of a complex consisting of MAGEL2, TRIM27 and USP7; directly interacts with USP7. Interacts with TRIM27. Interacts with VPS35; leading to recruitment at retromer-containing endosomes. Interacts with BMAL1 and PER2. Expressed in placenta, fetal and adult brain. Not detected in heart and small intestine, very low levels in fibroblasts. Not expressed in brain of a Prader-Willi patient.

The protein localises to the early endosome. It is found in the cytoplasm. Its subcellular location is the nucleus. Functionally, probably enhances ubiquitin ligase activity of RING-type zinc finger-containing E3 ubiquitin-protein ligases, possibly through recruitment and/or stabilization of the Ubl-conjugating enzyme (E2) at the E3:substrate complex. Acts as a regulator of retrograde transport via its interaction with VPS35. Recruited to retromer-containing endosomes and promotes the formation of 'Lys-63'-linked polyubiquitin chains at 'Lys-220' of WASHC1 together with TRIM27, leading to promote endosomal F-actin assembly. Regulates the circadian clock by repressing the transcriptional activator activity of the CLOCK-BMAL1 heterodimer. Significantly promotes the cytoplasmic accumulation of CLOCK. This Homo sapiens (Human) protein is MAGE-like protein 2 (MAGEL2).